Consider the following 968-residue polypeptide: Translation initiation factor IF-2 (968 aa).

Low complexity predominate over residues 305 to 319 (KPAAAAGAPGAPGAA). Residues 305–376 (KPAAAAGAPG…NDRDARPEST (72 aa)) form a disordered region. Residues 468–635 (PRAPVVTVMG…QVLLQAEVLE (168 aa)) form the tr-type G domain. The segment at 477–484 (GHVDHGKT) is G1. 477–484 (GHVDHGKT) provides a ligand contact to GTP. Residues 502-506 (GITQH) form a G2 region. Residues 523 to 526 (DTPG) form a G3 region. GTP-binding positions include 523–527 (DTPGH) and 577–580 (NKID). The segment at 577–580 (NKID) is G4. The tract at residues 613 to 615 (SAR) is G5.

The protein belongs to the TRAFAC class translation factor GTPase superfamily. Classic translation factor GTPase family. IF-2 subfamily.

It is found in the cytoplasm. Its function is as follows. One of the essential components for the initiation of protein synthesis. Protects formylmethionyl-tRNA from spontaneous hydrolysis and promotes its binding to the 30S ribosomal subunits. Also involved in the hydrolysis of GTP during the formation of the 70S ribosomal complex. The protein is Translation initiation factor IF-2 of Polaromonas sp. (strain JS666 / ATCC BAA-500).